The sequence spans 201 residues: ATP-dependent Clp protease proteolytic subunit (201 aa).

S101 acts as the Nucleophile in catalysis. H126 is a catalytic residue.

This sequence belongs to the peptidase S14 family. In terms of assembly, fourteen ClpP subunits assemble into 2 heptameric rings which stack back to back to give a disk-like structure with a central cavity, resembling the structure of eukaryotic proteasomes.

It localises to the cytoplasm. The catalysed reaction is Hydrolysis of proteins to small peptides in the presence of ATP and magnesium. alpha-casein is the usual test substrate. In the absence of ATP, only oligopeptides shorter than five residues are hydrolyzed (such as succinyl-Leu-Tyr-|-NHMec, and Leu-Tyr-Leu-|-Tyr-Trp, in which cleavage of the -Tyr-|-Leu- and -Tyr-|-Trp bonds also occurs).. Cleaves peptides in various proteins in a process that requires ATP hydrolysis. Has a chymotrypsin-like activity. Plays a major role in the degradation of misfolded proteins. The sequence is that of ATP-dependent Clp protease proteolytic subunit from Francisella tularensis subsp. tularensis (strain FSC 198).